A 130-amino-acid polypeptide reads, in one-letter code: Small ribosomal subunit protein uS9 (130 aa).

Residues 102–130 (GLLTRDSRMKERKKPGLKGARRAPQFSKR) form a disordered region. Residues 111-130 (KERKKPGLKGARRAPQFSKR) show a composition bias toward basic residues.

Belongs to the universal ribosomal protein uS9 family.

This is Small ribosomal subunit protein uS9 from Listeria monocytogenes serovar 1/2a (strain ATCC BAA-679 / EGD-e).